Consider the following 386-residue polypeptide: DNA-directed RNA polymerase subunit Rpo1C (386 aa).

Belongs to the RNA polymerase beta' chain family. In terms of assembly, part of the RNA polymerase complex.

It is found in the cytoplasm. The catalysed reaction is RNA(n) + a ribonucleoside 5'-triphosphate = RNA(n+1) + diphosphate. Its function is as follows. DNA-dependent RNA polymerase (RNAP) catalyzes the transcription of DNA into RNA using the four ribonucleoside triphosphates as substrates. Forms part of the jaw domain. This Methanococcus maripaludis (strain DSM 14266 / JCM 13030 / NBRC 101832 / S2 / LL) protein is DNA-directed RNA polymerase subunit Rpo1C.